A 1754-amino-acid chain; its full sequence is Collagen alpha-1(XVIII) chain (1754 aa).

Residues 1 to 23 form the signal peptide; it reads MAPYPCGCHILLLLFCCLAAARA. The disordered stretch occupies residues 42 to 104; that stretch reads ATTIPEPQGP…TSAESPDAPE (63 aa). Residues 57–73 show a composition bias toward polar residues; it reads TADTTTHVTPRNGSTEP. 3 N-linked (GlcNAc...) asparagine glycosylation sites follow: Asn68, Asn129, and Asn164. The tract at residues 152-256 is disordered; that stretch reads LALAGPSSTP…APSQQLQRPD (105 aa). Over residues 157 to 169 the composition is skewed to polar residues; it reads PSSTPQENGTTLW. Positions 215 to 253 are enriched in low complexity; that stretch reads SGRASLSSLLGGAPPWGSLQDPDSQGLSPAAAAPSQQLQ. Positions 329–446 constitute an FZ domain; sequence APAGRCLPLP…TQEDGYCVLI (118 aa). Cystine bridges form between Cys334-Cys397, Cys344-Cys390, Cys381-Cys419, Cys408-Cys443, and Cys412-Cys432. Residues 456 to 644 enclose the Laminin G-like domain; sequence EVGLLQLLGD…IAELKVRRDP (189 aa). The tract at residues 645–751 is nonhelical region 1 (NC1); the sequence is QVSPMHCLDE…RTPGGRVKEG (107 aa). Residues 645-1443 are disordered; it reads QVSPMHCLDE…GPPGTMGASS (799 aa). Residues 672-681 are compositionally biased toward basic and acidic residues; it reads DARELLREET. Thr696 is modified (phosphothreonine). Polar residues predominate over residues 717–738; that stretch reads QTTVASLGAQTLPGSDSVSTWD. Positions 752-785 are triple-helical region 1 (COL1); it reads GLKGQKGEPGVPGPPGRAGPPGSPCLPGPPGLPC. Residues 762-789 show a composition bias toward pro residues; the sequence is VPGPPGRAGPPGSPCLPGPPGLPCPVSP. The segment at 786 to 795 is nonhelical region 2 (NC2); that stretch reads PVSPLGPAGP. The segment at 796–875 is triple-helical region 2 (COL2); it reads ALQTVPGPQG…QGPPGPPGPS (80 aa). Basic and acidic residues predominate over residues 815-831; it reads TPGRDGEPGDPGEDGKP. Positions 833 to 846 are enriched in low complexity; that stretch reads DTGPQGFPGTPGDV. Positions 862 to 874 are enriched in pro residues; the sequence is PPGPQGPPGPPGP. Positions 876–899 are nonhelical region 3 (NC3); that stretch reads FRHDKLTFIDMEGSGFGGDLEALR. A glycan (O-linked (Xyl...) (chondroitin sulfate) serine) is linked at Ser889. Residues 900 to 1021 form a triple-helical region 3 (COL3) region; it reads GPRGFPGPPG…PGPPGPPGPG (122 aa). The segment covering 904 to 914 has biased composition (pro residues); that stretch reads FPGPPGPPGVP. A glycan (N-linked (GlcNAc...) asparagine) is linked at Asn926. A compositionally biased stretch (low complexity) spans 930–942; that stretch reads VPGPAGLPGVPGR. The segment covering 946–961 has biased composition (pro residues); that stretch reads PGFPGLPGPPGPPGRE. Residues 976–1003 show a composition bias toward low complexity; it reads AGAPGHKGSKGAPGPAGARGESGLAGAP. Positions 1005–1021 are enriched in pro residues; that stretch reads PAGPPGPPGPPGPPGPG. Positions 1022-1044 are nonhelical region 4 (NC4); sequence LPAGFDDMEGSGGPFWSTARSAD. The triple-helical region 4 (COL4) stretch occupies residues 1045 to 1127; sequence GPQGPPGLPG…PGPPGPPGPV (83 aa). Over residues 1053–1065 the composition is skewed to low complexity; it reads PGLKGDPGVPGLP. The span at 1095-1109 shows a compositional bias: basic and acidic residues; it reads KGDRGSRGEKGDPGK. The span at 1117-1126 shows a compositional bias: pro residues; that stretch reads LPGPPGPPGP. Residues 1128–1141 form a nonhelical region 5 (NC5) region; the sequence is VYVSEQDGSVLSVP. Positions 1141 to 1153 are enriched in low complexity; the sequence is PGPEGRPGFAGFP. Residues 1142–1183 are triple-helical region 5 (COL5); it reads GPEGRPGFAGFPGPAGPKGNLGSKGERGSPGPKGEKGEPGSI. The tract at residues 1184–1196 is nonhelical region 6 (NC6); sequence FSPDGGALGPAQK. The interval 1197-1269 is triple-helical region 6 (COL6); it reads GAKGEPGFRG…PGPPGPPGTP (73 aa). A compositionally biased stretch (pro residues) spans 1254-1268; it reads PGPPGPPGPPGPPGT. A nonhelical region 7 (NC7) region spans residues 1270-1279; sequence VYDSNVFAES. Residues 1280-1312 form a triple-helical region 7 (COL7) region; the sequence is SRPGPPGLPGNQGPPGPKGAKGEVGPPGPPGQF. Residues 1282–1296 show a composition bias toward pro residues; that stretch reads PGPPGLPGNQGPPGP. Residues 1313–1324 form a nonhelical region 8 (NC8) region; the sequence is PFDFLQLEAEMK. Over residues 1321-1341 the composition is skewed to basic and acidic residues; the sequence is AEMKGEKGDRGDAGQKGERGE. Positions 1325-1346 are triple-helical region 8 (COL8); that stretch reads GEKGDRGDAGQKGERGEPGGGG. Residues 1330–1332 carry the Cell attachment site motif; sequence RGD. Residues 1347-1353 are nonhelical region 9 (NC9); sequence FFGSSLP. Composition is skewed to pro residues over residues 1353–1365, 1401–1414, and 1424–1436; these read PGPP…PGPR, PPGP…PSFP, and PGPP…PGPP. The segment at 1354–1411 is triple-helical region 9 (COL9); sequence GPPGPPGPPGPRGYPGIPGPKGESIRGQPGPPGPQGPPGIGYEGRQGPPGPPGPPGPP. A nonhelical region 10 (NC10) region spans residues 1412–1424; that stretch reads SFPGPHRQTISVP. The interval 1425–1442 is triple-helical region 10 (COL10); it reads GPPGPPGPPGPPGTMGAS. Residues 1443 to 1754 form a nonhelical region 11 (NC11) region; sequence SGVRLWATRQ…IENSFMTASK (312 aa). The interval 1456 to 1501 is non-collagenous domain 1 association domain; it reads GQVHEVPEGWLIFVAEQEELYVRVQNGFRKVQLEARTPLPRGTDNE. Positions 1502–1571 are non-collagenous domain 1 hinge region; the sequence is VAALQPPVVQ…RPARPTSPPA (70 aa). The disordered stretch occupies residues 1511-1556; sequence QLHDSNPYPRREHPHPTARPWRADDILASPPRLPEPQPYPGAPHHS. Positions 1519-1535 are enriched in basic and acidic residues; sequence PRREHPHPTARPWRADD. Positions 1541–1551 are enriched in pro residues; sequence PRLPEPQPYPG. O-linked (GalNAc...) threonine glycosylation occurs at Thr1567. The Zn(2+) site is built by His1572, His1574, His1582, and Asp1647. 2 disulfides stabilise this stretch: Cys1604-Cys1744 and Cys1706-Cys1736.

Belongs to the multiplexin collagen family. As to quaternary structure, forms homotrimers. Recombinant non-collagenous domain 1 has stronger affinity to NID1, HSPG2 and laminin-1:NID1 complex and lower affinity to FBLN1 and FBLN2 than endostatin. Monomeric. Interacts with KDR/VEGFR2. Interacts with the ITGA5:ITGB1 complex. Interacts with NID1, HSPG2, laminin-1:NID1 complex, FBLN1 and FBLN2. Prolines at the third position of the tripeptide repeating unit (G-X-Y) of the triple-helical regions are hydroxylated. In terms of processing, circulating endostatins are found as sialoglycoprotein and asialoglycoprotein structures. Post-translationally, undergoes proteolytic processing by CTSL/cathepsin-L and elastase-like proteases to generate both non-collagenous domain 1 trimers and endostatin monomers. In tissue extracts (brain, skeletal muscle, heart, kidney, testis and liver) predominantly bands of approximately 38 kDa are detected; recombinant non-collagenous domain 1 shows similar mobility. In vitro, several proteolytic cleavage sites in the non-collagenous domain 1 hinge region generating different endostatin-like peptides are reported. Detected in placenta (at protein level). Present in multiple organs with highest levels in liver, lung and kidney.

Its subcellular location is the secreted. The protein localises to the extracellular space. It localises to the extracellular matrix. The protein resides in the basement membrane. In terms of biological role, probably plays a major role in determining the retinal structure as well as in the closure of the neural tube. Functionally, may regulate extracellular matrix-dependent motility and morphogenesis of endothelial and non-endothelial cells; the function requires homotrimerization and implicates MAPK signaling. Its function is as follows. Potently inhibits endothelial cell proliferation and angiogenesis. May inhibit angiogenesis by binding to the heparan sulfate proteoglycans involved in growth factor signaling. Inhibits VEGFA-induced endothelial cell proliferation and migration. Seems to inhibit VEGFA-mediated signaling by blocking the interaction of VEGFA to its receptor KDR/VEGFR2. Modulates endothelial cell migration in an integrin-dependent manner implicating integrin ITGA5:ITGB1 and to a lesser extent ITGAV:ITGB3 and ITGAV:ITGB5. May negatively regulate the activity of homotrimeric non-collagenous domain 1. The protein is Collagen alpha-1(XVIII) chain of Homo sapiens (Human).